We begin with the raw amino-acid sequence, 159 residues long: Aspartate carbamoyltransferase regulatory chain (159 aa).

Residues Cys-113, Cys-118, Cys-143, and Cys-146 each coordinate Zn(2+).

Belongs to the PyrI family. Contains catalytic and regulatory chains. It depends on Zn(2+) as a cofactor.

Involved in allosteric regulation of aspartate carbamoyltransferase. The chain is Aspartate carbamoyltransferase regulatory chain from Methanococcoides burtonii (strain DSM 6242 / NBRC 107633 / OCM 468 / ACE-M).